The chain runs to 294 residues: Glyceraldehyde-3-phosphate dehydrogenase (294 aa).

Aspartate 19, arginine 63, and threonine 105 together coordinate NAD(+). D-glyceraldehyde 3-phosphate-binding positions include serine 134 to threonine 136 and threonine 165. Cysteine 135 serves as the catalytic Nucleophile. Lysine 177 is subject to N6-acetyllysine. Residues threonine 194–glycine 195 and arginine 217 contribute to the D-glyceraldehyde 3-phosphate site. Lysine 234 is modified (N6-acetyllysine).

Belongs to the glyceraldehyde-3-phosphate dehydrogenase family. Homotetramer.

It localises to the cytoplasm. It catalyses the reaction D-glyceraldehyde 3-phosphate + phosphate + NAD(+) = (2R)-3-phospho-glyceroyl phosphate + NADH + H(+). The protein operates within carbohydrate degradation; glycolysis; pyruvate from D-glyceraldehyde 3-phosphate: step 1/5. In terms of biological role, catalyzes the oxidative phosphorylation of glyceraldehyde 3-phosphate (G3P) to 1,3-bisphosphoglycerate (BPG) using the cofactor NAD. The first reaction step involves the formation of a hemiacetal intermediate between G3P and a cysteine residue, and this hemiacetal intermediate is then oxidized to a thioester, with concomitant reduction of NAD to NADH. The reduced NADH is then exchanged with the second NAD, and the thioester is attacked by a nucleophilic inorganic phosphate to produce BPG. This chain is Glyceraldehyde-3-phosphate dehydrogenase (gap), found in Pseudescherichia vulneris (Escherichia vulneris).